The primary structure comprises 316 residues: 4-diphosphocytidyl-2-C-methyl-D-erythritol kinase (316 aa).

Lys-32 is a catalytic residue. 126–136 contacts ATP; it reads PVGAGLGGGSA. Asp-168 is an active-site residue.

The protein belongs to the GHMP kinase family. IspE subfamily.

The catalysed reaction is 4-CDP-2-C-methyl-D-erythritol + ATP = 4-CDP-2-C-methyl-D-erythritol 2-phosphate + ADP + H(+). It participates in isoprenoid biosynthesis; isopentenyl diphosphate biosynthesis via DXP pathway; isopentenyl diphosphate from 1-deoxy-D-xylulose 5-phosphate: step 3/6. Catalyzes the phosphorylation of the position 2 hydroxy group of 4-diphosphocytidyl-2C-methyl-D-erythritol. This Bifidobacterium longum subsp. infantis (strain ATCC 15697 / DSM 20088 / JCM 1222 / NCTC 11817 / S12) protein is 4-diphosphocytidyl-2-C-methyl-D-erythritol kinase.